The chain runs to 80 residues: Omega-conotoxin-like PuIA (80 aa).

Residues 1 to 22 (MKLTCVMIVAVLFLTAWTFVTA) form the signal peptide. The propeptide occupies 23–50 (DSIRALEDLFAKAPDEMENSGASPLNER). Intrachain disulfides connect Cys52–Cys70, Cys59–Cys74, and Cys69–Cys78.

The protein belongs to the conotoxin O1 superfamily. Expressed by the venom duct.

Its subcellular location is the secreted. Its function is as follows. Omega-conotoxins act at presynaptic membranes, they bind and block voltage-gated calcium channels (Cav). This chain is Omega-conotoxin-like PuIA, found in Conus pulicarius (Flea-bitten cone).